The following is a 142-amino-acid chain: Small ribosomal subunit protein uS12 (142 aa).

The segment at 1–44 (MANGKYAARKLKKDRQKHRWSDTDYARRERGLGKKSDPLEGAPQ) is disordered. Over residues 7–18 (AARKLKKDRQKH) the composition is skewed to basic residues. Basic and acidic residues predominate over residues 19–38 (RWSDTDYARRERGLGKKSDP).

Belongs to the universal ribosomal protein uS12 family. As to quaternary structure, part of the 30S ribosomal subunit.

Its function is as follows. With S4 and S5 plays an important role in translational accuracy. Located at the interface of the 30S and 50S subunits. The chain is Small ribosomal subunit protein uS12 from Haloarcula marismortui (strain ATCC 43049 / DSM 3752 / JCM 8966 / VKM B-1809) (Halobacterium marismortui).